We begin with the raw amino-acid sequence, 107 residues long: Glutaredoxin-1 (107 aa).

Residue Ala-2 is modified to N-acetylalanine. The Glutaredoxin domain occupies 3-106; sequence QEFVNCKIQS…TRLKQIGALQ (104 aa). Lys-9 bears the N6-succinyllysine mark. 2 disulfide bridges follow: Cys-23–Cys-26 and Cys-79–Cys-83.

It belongs to the glutaredoxin family.

The protein resides in the cytoplasm. Functionally, has a glutathione-disulfide oxidoreductase activity in the presence of NADPH and glutathione reductase. Reduces low molecular weight disulfides and proteins. The protein is Glutaredoxin-1 (Glrx) of Mus musculus (Mouse).